A 341-amino-acid chain; its full sequence is Short chain dehydrogenase FGM9 (341 aa).

NADP(+)-binding residues include Leu-38, Lys-63, Asp-88, and Asn-114. Catalysis depends on proton donor residues Ser-167 and Tyr-200. Tyr-200 and Lys-204 together coordinate NADP(+). The active-site Lowers pKa of active site Tyr is Lys-204.

This sequence belongs to the short-chain dehydrogenases/reductases (SDR) family.

It participates in secondary metabolite biosynthesis. Its function is as follows. Short chain dehydrogenase; part of the Fg3_54/C64 gene cluster that mediates the biosynthesis of the octapeptide fusaoctaxin A, a virulence factor that is required for cell-to-cell invasiveness of plant host. The 2 nonribosomal peptide synthetases NRPS9 and NRPS5 form an assembly line which likely utilizes GABA as a starter unit (loaded on the unique module M1 of NRPS9) and sequentially incorporates seven extender units composed of the residues L-Ala, L-allo-Ile, L-Ser, L-Val, L-Ser, L-Leu and L-Leu, respectively. During the process, each of the residues that are tethered on modules M3-M7 of NRPS5 containing an E domain can undergo an epimerization reaction to produce a D-configuration before the transpeptidation reaction occurs. The elongation of the peptidyl chain might be terminated by module M8-mediated L-Leu incorporation, followed by R domain-catalyzed 4 electron reduction to release the resulting octapeptide from the assembly line as an alcohol. Fusaoctaxin A is cleaved by the cluster specific ABC transporter FGM5 to the pentapeptide fusapentaxin A and the tripeptide fusatrixin A. The other enzymes from the cluster, FGM1, FGM2, FGM3 and FGM9 seem not to be involved in the biosynthesis of fusaoctaxin A and their functions have still to be determined. In Gibberella zeae (strain ATCC MYA-4620 / CBS 123657 / FGSC 9075 / NRRL 31084 / PH-1) (Wheat head blight fungus), this protein is Short chain dehydrogenase FGM9.